A 261-amino-acid polypeptide reads, in one-letter code: MSFTGIFHFFTNSPCDAAEPWQLGSQDAATPMMQGIIDLHHDIFFFLILILVFVSRILVRALWHFHSKKNPIPQRIVHGTTIEILRTIFPSIIPMFIAIPSFALLYSMDEVVVDPAMTIKAIGHQWYRTYEYSDYNSSDEQSLTFDSYTIPEDDPELGQSRLLEVDNRVVVPAKTHLRIIVTSADVPHSWAVPSSGVKCDAVPGRLNQISISVQREGVYYGQCSEICGTNHAFTPIVVEAVSRKDYGSRVSNQLIPQTGEA.

Over 1 to 34 (MSFTGIFHFFTNSPCDAAEPWQLGSQDAATPMMQ) the chain is Mitochondrial intermembrane. A helical membrane pass occupies residues 35–55 (GIIDLHHDIFFFLILILVFVS). The Mitochondrial matrix portion of the chain corresponds to 56–87 (RILVRALWHFHSKKNPIPQRIVHGTTIEILRT). The helical transmembrane segment at 88 to 108 (IFPSIIPMFIAIPSFALLYSM) threads the bilayer. Residues 109-261 (DEVVVDPAMT…NQLIPQTGEA (153 aa)) lie on the Mitochondrial intermembrane side of the membrane. Residues histidine 188, cysteine 223, glutamate 225, cysteine 227, and histidine 231 each contribute to the Cu cation site. A Mg(2+)-binding site is contributed by glutamate 225.

The protein belongs to the cytochrome c oxidase subunit 2 family. In terms of assembly, component of the cytochrome c oxidase (complex IV, CIV), a multisubunit enzyme composed of a catalytic core of 3 subunits and several supernumerary subunits. The complex exists as a monomer or a dimer and forms supercomplexes (SCs) in the inner mitochondrial membrane with ubiquinol-cytochrome c oxidoreductase (cytochrome b-c1 complex, complex III, CIII). Cu cation is required as a cofactor.

The protein localises to the mitochondrion inner membrane. It carries out the reaction 4 Fe(II)-[cytochrome c] + O2 + 8 H(+)(in) = 4 Fe(III)-[cytochrome c] + 2 H2O + 4 H(+)(out). Functionally, component of the cytochrome c oxidase, the last enzyme in the mitochondrial electron transport chain which drives oxidative phosphorylation. The respiratory chain contains 3 multisubunit complexes succinate dehydrogenase (complex II, CII), ubiquinol-cytochrome c oxidoreductase (cytochrome b-c1 complex, complex III, CIII) and cytochrome c oxidase (complex IV, CIV), that cooperate to transfer electrons derived from NADH and succinate to molecular oxygen, creating an electrochemical gradient over the inner membrane that drives transmembrane transport and the ATP synthase. Cytochrome c oxidase is the component of the respiratory chain that catalyzes the reduction of oxygen to water. Electrons originating from reduced cytochrome c in the intermembrane space (IMS) are transferred via the dinuclear copper A center (CU(A)) of subunit 2 and heme A of subunit 1 to the active site in subunit 1, a binuclear center (BNC) formed by heme A3 and copper B (CU(B)). The BNC reduces molecular oxygen to 2 water molecules using 4 electrons from cytochrome c in the IMS and 4 protons from the mitochondrial matrix. This is Cytochrome c oxidase subunit 2 (COX2) from Daucus carota (Wild carrot).